A 248-amino-acid polypeptide reads, in one-letter code: Protein PIMREG (248 aa).

Residues 1 to 10 (MASRWQNMGT) show a composition bias toward polar residues. The disordered stretch occupies residues 1-32 (MASRWQNMGTSVRRRSLQHQEQLEDSKELQPV). 2 positions are modified to phosphoserine: S11 and S16. Short sequence motifs (D-box) lie at residues 14-17 (RRSL) and 53-56 (RLPL). The interval 117–205 (KARRRKRGAQ…PSESDSDLEP (89 aa)) is disordered. A Phosphoserine modification is found at S129. S131 bears the Phosphoserine; by UHMK1; in vitro mark. Polar residues-rich tracts occupy residues 132-143 (PTHSLSQKSTRL) and 186-198 (PYSSTEPLCSPSE). Phosphoserine occurs at positions 199 and 201.

Isoform 1 and isoform 2 interact with PICALM; this interaction may target PICALM to the nucleus. During mitosis, associates with HDAC2 and MTA2 subunits of the chromatin-remodeling NuRD complex; this association is strongest at prometaphase and decreases as the cell progresses through metaphase and anaphase. Post-translationally, ubiquitinated by the anaphase-promoting complex/cyclosome (APC/C) complex in the presence of FZR1, leading to its degradation by the proteasome during mitotic exit. However, degradation is not essential for normal mitotic progression within a single cell cycle. As to expression, expressed in thymus (at protein level). Detected in spleen, colon, ovary and small intestines.

The protein localises to the nucleus. The protein resides in the nucleolus. In terms of biological role, during mitosis, may play a role in the control of metaphase-to-anaphase transition. The polypeptide is Protein PIMREG (Homo sapiens (Human)).